The sequence spans 207 residues: Large ribosomal subunit protein uL4 (207 aa).

A disordered region spans residues 53–76 (NRSAVRGGGRKPWRQKGTGRARQG). Basic residues predominate over residues 60–71 (GGRKPWRQKGTG).

Belongs to the universal ribosomal protein uL4 family. In terms of assembly, part of the 50S ribosomal subunit.

In terms of biological role, one of the primary rRNA binding proteins, this protein initially binds near the 5'-end of the 23S rRNA. It is important during the early stages of 50S assembly. It makes multiple contacts with different domains of the 23S rRNA in the assembled 50S subunit and ribosome. Functionally, forms part of the polypeptide exit tunnel. The chain is Large ribosomal subunit protein uL4 from Staphylococcus saprophyticus subsp. saprophyticus (strain ATCC 15305 / DSM 20229 / NCIMB 8711 / NCTC 7292 / S-41).